Here is a 1215-residue protein sequence, read N- to C-terminus: Reverse gyrase 2 (1215 aa).

The RG N-terminal-type zinc-finger motif lies at 3–44; the sequence is GGVNAVYMGLCYNCGGNIDEDRLEKGLPCARCLPSPPRRATP. Positions 13, 16, 31, and 34 each coordinate Zn(2+). ATP-binding positions include Gln-89 and 106 to 113; that span reads APTGVGKS. Residues 93 to 249 enclose the Helicase ATP-binding domain; it reads AKRLVKGDSF…SLVKARLKLY (157 aa). Positions 209–212 match the DEAD box motif; the sequence is DDVD. The topoisomerase I stretch occupies residues 614–1215; it reads VRVKTTLLVV…TGDVMGQSEA (602 aa). Residues 618-783 form the Toprim domain; the sequence is TTLLVVESPT…NVRRGRFHEV (166 aa). Position 624 (Glu-624) interacts with Mg(2+). The segment at 702–729 adopts an RG C-terminal-type zinc-finger fold; sequence IKRCLDCGAQHTSSSPFCPRCGSPRQVD. Positions 705, 708, 719, and 722 each coordinate Zn(2+). Asp-752 serves as a coordination point for Mg(2+). Residues 799-1200 enclose the Topo IA-type catalytic domain; that stretch reads EKSLIEAQKV…SVWRMVDEAV (402 aa). The active-site O-(5'-phospho-DNA)-tyrosine intermediate is Tyr-943.

The protein in the N-terminal section; belongs to the DEAD box helicase family. DDVD subfamily. It in the C-terminal section; belongs to the type IA topoisomerase family. In terms of assembly, monomer. It depends on Zn(2+) as a cofactor. Mg(2+) is required as a cofactor.

It localises to the cytoplasm. The enzyme catalyses ATP + H2O = ADP + phosphate + H(+). Modifies the topological state of DNA by introducing positive supercoils in an ATP-dependent process, increasing the linking number in steps of +1. Binds to single-stranded DNA, transiently cleaves and then rejoins the ends, introducing a positive supercoil in the process. The scissile phosphodiester is attacked by the catalytic tyrosine of the enzyme, resulting in the formation of a DNA-(5'-phosphotyrosyl)-enzyme intermediate. Probably involved in rewinding DNA strands in regions of the chromosome that have opened up to allow replication, transcription, DNA repair and/or for DNA protection. In Aeropyrum pernix (strain ATCC 700893 / DSM 11879 / JCM 9820 / NBRC 100138 / K1), this protein is Reverse gyrase 2.